The following is a 256-amino-acid chain: MWLGAYTWLNVFGILLQAAFIQNILLANFLGMCSYLACSTRVSTANGLGMSVALVLTVTGSINWFVHAFITGPKALTWISPSLASVNLGFLELIIFIVVIAAFTQILELLLEKVSRNLYLSLGIFLPLIAVNCAILGGVLFGITRSYPFIPMMIFSLGAGCGWWLAIVILATIKEKLAYSDIPKNLQGMGISFITTGLIAMAFMSLTGIDISKPSAKIQRAPLETEVVENTTNPLKESSSKHQPSISKARTQRRSL.

6 consecutive transmembrane segments (helical) span residues 1–21, 50–70, 83–103, 123–143, 149–169, and 189–209; these read MWLG…AAFI, MSVA…HAFI, LASV…IAAF, GIFL…LFGI, FIPM…AIVI, and MGIS…LTGI. Residues 229–249 show a composition bias toward polar residues; the sequence is ENTTNPLKESSSKHQPSISKA. Residues 229 to 256 form a disordered region; it reads ENTTNPLKESSSKHQPSISKARTQRRSL.

Belongs to the NqrDE/RnfAE family. As to quaternary structure, composed of six subunits; NqrA, NqrB, NqrC, NqrD, NqrE and NqrF.

Its subcellular location is the cell inner membrane. The enzyme catalyses a ubiquinone + n Na(+)(in) + NADH + H(+) = a ubiquinol + n Na(+)(out) + NAD(+). In terms of biological role, NQR complex catalyzes the reduction of ubiquinone-1 to ubiquinol by two successive reactions, coupled with the transport of Na(+) ions from the cytoplasm to the periplasm. NqrA to NqrE are probably involved in the second step, the conversion of ubisemiquinone to ubiquinol. This Chlamydia pneumoniae (Chlamydophila pneumoniae) protein is Na(+)-translocating NADH-quinone reductase subunit E.